The chain runs to 120 residues: Large ribosomal subunit protein uL18 (120 aa).

The segment covering 1 to 20 has biased composition (basic residues); it reads MKSTRKSATQRRHRRLRRHL. The disordered stretch occupies residues 1 to 26; the sequence is MKSTRKSATQRRHRRLRRHLSGTSER.

Belongs to the universal ribosomal protein uL18 family. As to quaternary structure, part of the 50S ribosomal subunit; part of the 5S rRNA/L5/L18/L25 subcomplex. Contacts the 5S and 23S rRNAs.

This is one of the proteins that bind and probably mediate the attachment of the 5S RNA into the large ribosomal subunit, where it forms part of the central protuberance. This is Large ribosomal subunit protein uL18 from Synechocystis sp. (strain ATCC 27184 / PCC 6803 / Kazusa).